The following is a 508-amino-acid chain: UDP-N-acetylmuramyl-tripeptide synthetase (508 aa).

Ser35 lines the UDP-N-acetyl-alpha-D-muramoyl-L-alanyl-D-glutamate pocket. 118-124 (GTDGKSS) serves as a coordination point for ATP. UDP-N-acetyl-alpha-D-muramoyl-L-alanyl-D-glutamate contacts are provided by residues 163-164 (ST), Thr190, and Arg200. N6-carboxylysine is present on Lys232.

It belongs to the MurCDEF family. MurE subfamily. Carboxylation is probably crucial for Mg(2+) binding and, consequently, for the gamma-phosphate positioning of ATP.

The protein resides in the cytoplasm. Its pathway is cell wall biogenesis; peptidoglycan biosynthesis. Its function is as follows. Catalyzes the addition of an amino acid to the nucleotide precursor UDP-N-acetylmuramoyl-L-alanyl-D-glutamate (UMAG) in the biosynthesis of bacterial cell-wall peptidoglycan. The sequence is that of UDP-N-acetylmuramyl-tripeptide synthetase from Borreliella burgdorferi (strain ATCC 35210 / DSM 4680 / CIP 102532 / B31) (Borrelia burgdorferi).